A 675-amino-acid polypeptide reads, in one-letter code: Transketolase, chloroplastic (675 aa).

Thiamine diphosphate contacts are provided by residues His-78 and 127 to 129 (GPL). Residue Asp-168 participates in Mg(2+) binding. Positions 169, 173, and 198 each coordinate thiamine diphosphate. Mg(2+)-binding residues include Asn-198 and Ile-200. His-275 is a binding site for thiamine diphosphate. His-275, Arg-369, and Ser-396 together coordinate substrate. Residues Glu-423 and 450–453 (FTDY) each bind thiamine diphosphate. The active-site Proton donor is Glu-423. The substrate site is built by His-474, Asp-482, and Arg-533.

As to quaternary structure, homodimer. Mg(2+) serves as cofactor. It depends on Ca(2+) as a cofactor. Requires Mn(2+) as cofactor. Co(2+) is required as a cofactor. The cofactor is thiamine diphosphate.

It localises to the plastid. The protein resides in the chloroplast thylakoid membrane. The enzyme catalyses D-sedoheptulose 7-phosphate + D-glyceraldehyde 3-phosphate = aldehydo-D-ribose 5-phosphate + D-xylulose 5-phosphate. It participates in carbohydrate biosynthesis; Calvin cycle. Functionally, catalyzes the reversible transfer of a two-carbon ketol group from fructose-6-phosphate or sedoheptulose-7-phosphate to glyceraldehyde-3-phosphate to yield xylulose-5-phosphate and erythrose-4-phosphate or ribose-5-phosphate, respectively. The sequence is that of Transketolase, chloroplastic from Zea mays (Maize).